The primary structure comprises 403 residues: Histidine decarboxylase (403 aa).

His120 contributes to the substrate binding site. At Lys233 the chain carries N6-(pyridoxal phosphate)lysine.

The protein belongs to the group II decarboxylase family. Homotetramer. The cofactor is pyridoxal 5'-phosphate.

The enzyme catalyses L-histidine + H(+) = histamine + CO2. This chain is Histidine decarboxylase, found in Pseudomonas entomophila (strain L48).